The following is a 396-amino-acid chain: Flavohemoprotein (396 aa).

The Globin domain maps to 1–136; sequence MLDAQTIATV…LANVFIHREA (136 aa). Heme b is bound at residue histidine 85. Catalysis depends on charge relay system residues tyrosine 95 and glutamate 135. The reductase stretch occupies residues 147-396; sequence GGWEGTRPFR…YECFGPHKVL (250 aa). The region spanning 150-255 is the FAD-binding FR-type domain; that stretch reads EGTRPFRIVA…AAPAGDFFMN (106 aa). Residues tyrosine 188 and 204 to 207 contribute to the FAD site; that span reads RQYS. NADP(+) is bound at residue 268–273; that stretch reads GVGQTP. 389 to 392 serves as a coordination point for FAD; that stretch reads CFGP.

The protein belongs to the globin family. Two-domain flavohemoproteins subfamily. In the C-terminal section; belongs to the flavoprotein pyridine nucleotide cytochrome reductase family. Monomer. Requires heme b as cofactor. FAD is required as a cofactor.

The enzyme catalyses 2 nitric oxide + NADPH + 2 O2 = 2 nitrate + NADP(+) + H(+). The catalysed reaction is 2 nitric oxide + NADH + 2 O2 = 2 nitrate + NAD(+) + H(+). Its function is as follows. Is involved in NO detoxification in an aerobic process, termed nitric oxide dioxygenase (NOD) reaction that utilizes O(2) and NAD(P)H to convert NO to nitrate, which protects the bacterium from various noxious nitrogen compounds. Therefore, plays a central role in the inducible response to nitrosative stress. This chain is Flavohemoprotein (hmp), found in Salmonella typhimurium (strain LT2 / SGSC1412 / ATCC 700720).